A 1079-amino-acid chain; its full sequence is Spermatogenesis-associated protein 31G1 (1079 aa).

Disordered regions lie at residues 97–145 (EVEE…GSEG), 261–281 (EDLE…SPSV), 297–317 (GVLS…LEVL), 331–362 (KMPQ…EGGL), 376–412 (EKPQ…RYKP), 506–566 (NLWA…SPPP), 637–678 (VPVF…EQRK), and 840–975 (PHSS…NHPA). Over residues 98 to 113 (VEEEGEEEEEGEDEAS) the composition is skewed to acidic residues. Residues 336-345 (FEPPMPPPCQ) are compositionally biased toward pro residues. Over residues 398–412 (LQRESSLEDPSRYKP) the composition is skewed to basic and acidic residues. Low complexity-rich tracts occupy residues 551-562 (NSSASRSPSLAL) and 645-655 (SSPSSNSVSKS). Residues 669–678 (PDGEAVEQRK) show a composition bias toward basic and acidic residues. A compositionally biased stretch (basic residues) spans 942–951 (AKKREHPRKP).

Dispensable for normal development and fertility. This chain is Spermatogenesis-associated protein 31G1, found in Homo sapiens (Human).